Reading from the N-terminus, the 450-residue chain is Deoxyguanosinetriphosphate triphosphohydrolase-like protein (450 aa).

The 141-residue stretch at 61-201 (RLTHSLEVAQ…AKLAPELNAD (141 aa)) folds into the HD domain.

The protein belongs to the dGTPase family. Type 2 subfamily.

The sequence is that of Deoxyguanosinetriphosphate triphosphohydrolase-like protein from Pasteurella multocida (strain Pm70).